Reading from the N-terminus, the 290-residue chain is 4-hydroxy-tetrahydrodipicolinate synthase (290 aa).

Position 45 (Thr45) interacts with pyruvate. The Proton donor/acceptor role is filled by Tyr133. The Schiff-base intermediate with substrate role is filled by Lys161. Ile203 lines the pyruvate pocket.

It belongs to the DapA family. As to quaternary structure, homotetramer; dimer of dimers.

The protein resides in the cytoplasm. The enzyme catalyses L-aspartate 4-semialdehyde + pyruvate = (2S,4S)-4-hydroxy-2,3,4,5-tetrahydrodipicolinate + H2O + H(+). It functions in the pathway amino-acid biosynthesis; L-lysine biosynthesis via DAP pathway; (S)-tetrahydrodipicolinate from L-aspartate: step 3/4. Catalyzes the condensation of (S)-aspartate-beta-semialdehyde [(S)-ASA] and pyruvate to 4-hydroxy-tetrahydrodipicolinate (HTPA). The protein is 4-hydroxy-tetrahydrodipicolinate synthase of Cellvibrio japonicus (strain Ueda107) (Pseudomonas fluorescens subsp. cellulosa).